We begin with the raw amino-acid sequence, 491 residues long: Glutamate--tRNA ligase (491 aa).

The short motif at 13–23 (PSPTGFLHIGN) is the 'HIGH' region element. Zn(2+) is bound by residues Cys-110, Cys-112, Cys-137, and His-139. Residues 254 to 258 (KLSKR) carry the 'KMSKS' region motif. Residue Lys-257 participates in ATP binding.

The protein belongs to the class-I aminoacyl-tRNA synthetase family. Glutamate--tRNA ligase type 1 subfamily. In terms of assembly, monomer. It depends on Zn(2+) as a cofactor.

Its subcellular location is the cytoplasm. The catalysed reaction is tRNA(Glu) + L-glutamate + ATP = L-glutamyl-tRNA(Glu) + AMP + diphosphate. Catalyzes the attachment of glutamate to tRNA(Glu) in a two-step reaction: glutamate is first activated by ATP to form Glu-AMP and then transferred to the acceptor end of tRNA(Glu). The chain is Glutamate--tRNA ligase from Listeria innocua serovar 6a (strain ATCC BAA-680 / CLIP 11262).